The chain runs to 156 residues: ATP synthase subunit b (156 aa).

A helical transmembrane segment spans residues 12–32 (VAFFIFVLFCMKFVWPPVIAA).

It belongs to the ATPase B chain family. As to quaternary structure, F-type ATPases have 2 components, F(1) - the catalytic core - and F(0) - the membrane proton channel. F(1) has five subunits: alpha(3), beta(3), gamma(1), delta(1), epsilon(1). F(0) has three main subunits: a(1), b(2) and c(10-14). The alpha and beta chains form an alternating ring which encloses part of the gamma chain. F(1) is attached to F(0) by a central stalk formed by the gamma and epsilon chains, while a peripheral stalk is formed by the delta and b chains.

It is found in the cell inner membrane. In terms of biological role, f(1)F(0) ATP synthase produces ATP from ADP in the presence of a proton or sodium gradient. F-type ATPases consist of two structural domains, F(1) containing the extramembraneous catalytic core and F(0) containing the membrane proton channel, linked together by a central stalk and a peripheral stalk. During catalysis, ATP synthesis in the catalytic domain of F(1) is coupled via a rotary mechanism of the central stalk subunits to proton translocation. Functionally, component of the F(0) channel, it forms part of the peripheral stalk, linking F(1) to F(0). The chain is ATP synthase subunit b from Pseudomonas aeruginosa (strain UCBPP-PA14).